The following is a 518-amino-acid chain: DNA nucleotidylexotransferase (518 aa).

Positions 11–17 (FGKKRQK) match the Nuclear localization signal motif. Residues 27-124 (IYEIKFHEFV…KPVDTKGKYQ (98 aa)) form the BRCT domain. The segment at 153–518 (SQYACQRRTT…EYIQPSERNA (366 aa)) is mediates interaction with DNTTIP2. The segment at 260–264 (VGLKT) is involved in DNA binding. Residues 335-340 (GFRRGK) and 344-347 (HDVD) contribute to the a 2'-deoxyribonucleoside 5'-triphosphate site. Mg(2+)-binding residues include aspartate 345, aspartate 347, and aspartate 442. Residue 457–458 (GW) coordinates a 2'-deoxyribonucleoside 5'-triphosphate.

This sequence belongs to the DNA polymerase type-X family. As to quaternary structure, interacts with PRP19 and DNTTIP1. Interacts with TRERF1. Forms a ternary complex with DNTTIP2 and core histone. Released from this complex by PCNA. It depends on Mg(2+) as a cofactor.

The protein resides in the nucleus. It catalyses the reaction DNA(n) + a 2'-deoxyribonucleoside 5'-triphosphate = DNA(n+1) + diphosphate. Functionally, template-independent DNA polymerase which catalyzes the random addition of deoxynucleoside 5'-triphosphate to the 3'-end of a DNA initiator. One of the in vivo functions of this enzyme is the addition of nucleotides at the junction (N region) of rearranged Ig heavy chain and T-cell receptor gene segments during the maturation of B- and T-cells. This Monodelphis domestica (Gray short-tailed opossum) protein is DNA nucleotidylexotransferase (DNTT).